An 875-amino-acid chain; its full sequence is Leucine--tRNA ligase (875 aa).

The short motif at 57–67 (PYPSGQIHMGH) is the 'HIGH' region element. The short motif at 631-635 (KMSKS) is the 'KMSKS' region element. Lys634 lines the ATP pocket.

This sequence belongs to the class-I aminoacyl-tRNA synthetase family.

It localises to the cytoplasm. It carries out the reaction tRNA(Leu) + L-leucine + ATP = L-leucyl-tRNA(Leu) + AMP + diphosphate. In Granulibacter bethesdensis (strain ATCC BAA-1260 / CGDNIH1), this protein is Leucine--tRNA ligase.